Consider the following 419-residue polypeptide: UDP-N-acetylglucosamine 1-carboxyvinyltransferase (419 aa).

22–23 provides a ligand contact to phosphoenolpyruvate; sequence KN. R95 serves as a coordination point for UDP-N-acetyl-alpha-D-glucosamine. C119 serves as the catalytic Proton donor. C119 carries the post-translational modification 2-(S-cysteinyl)pyruvic acid O-phosphothioketal. UDP-N-acetyl-alpha-D-glucosamine is bound by residues 164–167, D308, and I330; that span reads KVSV.

The protein belongs to the EPSP synthase family. MurA subfamily.

It localises to the cytoplasm. It carries out the reaction phosphoenolpyruvate + UDP-N-acetyl-alpha-D-glucosamine = UDP-N-acetyl-3-O-(1-carboxyvinyl)-alpha-D-glucosamine + phosphate. It functions in the pathway cell wall biogenesis; peptidoglycan biosynthesis. Its function is as follows. Cell wall formation. Adds enolpyruvyl to UDP-N-acetylglucosamine. In Rickettsia conorii (strain ATCC VR-613 / Malish 7), this protein is UDP-N-acetylglucosamine 1-carboxyvinyltransferase.